Consider the following 309-residue polypeptide: Porphobilinogen deaminase (309 aa).

Cys241 carries the S-(dipyrrolylmethanemethyl)cysteine modification.

This sequence belongs to the HMBS family. As to quaternary structure, monomer. Dipyrromethane is required as a cofactor.

The catalysed reaction is 4 porphobilinogen + H2O = hydroxymethylbilane + 4 NH4(+). It participates in porphyrin-containing compound metabolism; protoporphyrin-IX biosynthesis; coproporphyrinogen-III from 5-aminolevulinate: step 2/4. Functionally, tetrapolymerization of the monopyrrole PBG into the hydroxymethylbilane pre-uroporphyrinogen in several discrete steps. The protein is Porphobilinogen deaminase of Oceanobacillus iheyensis (strain DSM 14371 / CIP 107618 / JCM 11309 / KCTC 3954 / HTE831).